Consider the following 133-residue polypeptide: S-adenosylmethionine decarboxylase proenzyme (133 aa).

The active-site Schiff-base intermediate with substrate; via pyruvic acid is the serine 64. The residue at position 64 (serine 64) is a Pyruvic acid (Ser); by autocatalysis. Residue histidine 69 is the Proton acceptor; for processing activity of the active site. Cysteine 84 acts as the Proton donor; for catalytic activity in catalysis.

Belongs to the prokaryotic AdoMetDC family. Type 1 subfamily. As to quaternary structure, heterotetramer of two alpha and two beta chains arranged as a dimer of alpha/beta heterodimers. Pyruvate serves as cofactor. Is synthesized initially as an inactive proenzyme. Formation of the active enzyme involves a self-maturation process in which the active site pyruvoyl group is generated from an internal serine residue via an autocatalytic post-translational modification. Two non-identical subunits are generated from the proenzyme in this reaction, and the pyruvate is formed at the N-terminus of the alpha chain, which is derived from the carboxyl end of the proenzyme. The post-translation cleavage follows an unusual pathway, termed non-hydrolytic serinolysis, in which the side chain hydroxyl group of the serine supplies its oxygen atom to form the C-terminus of the beta chain, while the remainder of the serine residue undergoes an oxidative deamination to produce ammonia and the pyruvoyl group blocking the N-terminus of the alpha chain.

It catalyses the reaction S-adenosyl-L-methionine + H(+) = S-adenosyl 3-(methylsulfanyl)propylamine + CO2. Its pathway is amine and polyamine biosynthesis; S-adenosylmethioninamine biosynthesis; S-adenosylmethioninamine from S-adenosyl-L-methionine: step 1/1. Functionally, catalyzes the decarboxylation of S-adenosylmethionine to S-adenosylmethioninamine (dcAdoMet), the propylamine donor required for the synthesis of the polyamines spermine and spermidine from the diamine putrescine. This is S-adenosylmethionine decarboxylase proenzyme from Sulfurihydrogenibium sp. (strain YO3AOP1).